The sequence spans 373 residues: Queuine tRNA-ribosyltransferase (373 aa).

The active-site Proton acceptor is aspartate 94. Substrate is bound by residues aspartate 94 to phenylalanine 98, aspartate 148, glutamine 191, and glycine 218. The RNA binding stretch occupies residues glycine 249 to tyrosine 255. Aspartate 268 acts as the Nucleophile in catalysis. Residues threonine 273 to arginine 277 are RNA binding; important for wobble base 34 recognition. Zn(2+) contacts are provided by cysteine 306, cysteine 308, cysteine 311, and histidine 337.

It belongs to the queuine tRNA-ribosyltransferase family. As to quaternary structure, homodimer. Within each dimer, one monomer is responsible for RNA recognition and catalysis, while the other monomer binds to the replacement base PreQ1. Requires Zn(2+) as cofactor.

It carries out the reaction 7-aminomethyl-7-carbaguanine + guanosine(34) in tRNA = 7-aminomethyl-7-carbaguanosine(34) in tRNA + guanine. The protein operates within tRNA modification; tRNA-queuosine biosynthesis. Its function is as follows. Catalyzes the base-exchange of a guanine (G) residue with the queuine precursor 7-aminomethyl-7-deazaguanine (PreQ1) at position 34 (anticodon wobble position) in tRNAs with GU(N) anticodons (tRNA-Asp, -Asn, -His and -Tyr). Catalysis occurs through a double-displacement mechanism. The nucleophile active site attacks the C1' of nucleotide 34 to detach the guanine base from the RNA, forming a covalent enzyme-RNA intermediate. The proton acceptor active site deprotonates the incoming PreQ1, allowing a nucleophilic attack on the C1' of the ribose to form the product. After dissociation, two additional enzymatic reactions on the tRNA convert PreQ1 to queuine (Q), resulting in the hypermodified nucleoside queuosine (7-(((4,5-cis-dihydroxy-2-cyclopenten-1-yl)amino)methyl)-7-deazaguanosine). The chain is Queuine tRNA-ribosyltransferase from Ruminiclostridium cellulolyticum (strain ATCC 35319 / DSM 5812 / JCM 6584 / H10) (Clostridium cellulolyticum).